Here is a 259-residue protein sequence, read N- to C-terminus: Imidazole glycerol phosphate synthase subunit HisF (259 aa).

Residues D11 and D130 contribute to the active site.

It belongs to the HisA/HisF family. In terms of assembly, heterodimer of HisH and HisF.

Its subcellular location is the cytoplasm. The enzyme catalyses 5-[(5-phospho-1-deoxy-D-ribulos-1-ylimino)methylamino]-1-(5-phospho-beta-D-ribosyl)imidazole-4-carboxamide + L-glutamine = D-erythro-1-(imidazol-4-yl)glycerol 3-phosphate + 5-amino-1-(5-phospho-beta-D-ribosyl)imidazole-4-carboxamide + L-glutamate + H(+). Its pathway is amino-acid biosynthesis; L-histidine biosynthesis; L-histidine from 5-phospho-alpha-D-ribose 1-diphosphate: step 5/9. Functionally, IGPS catalyzes the conversion of PRFAR and glutamine to IGP, AICAR and glutamate. The HisF subunit catalyzes the cyclization activity that produces IGP and AICAR from PRFAR using the ammonia provided by the HisH subunit. The polypeptide is Imidazole glycerol phosphate synthase subunit HisF (Acidovorax ebreus (strain TPSY) (Diaphorobacter sp. (strain TPSY))).